The primary structure comprises 22 residues: Probable ATP-dependent Clp protease proteolytic subunit (22 aa).

It belongs to the peptidase S14 family. In terms of assembly, component of the chloroplastic Clp protease core complex.

The catalysed reaction is Hydrolysis of proteins to small peptides in the presence of ATP and magnesium. alpha-casein is the usual test substrate. In the absence of ATP, only oligopeptides shorter than five residues are hydrolyzed (such as succinyl-Leu-Tyr-|-NHMec, and Leu-Tyr-Leu-|-Tyr-Trp, in which cleavage of the -Tyr-|-Leu- and -Tyr-|-Trp bonds also occurs).. Cleaves peptides in various proteins in a process that requires ATP hydrolysis. Has a chymotrypsin-like activity. Plays a major role in the degradation of misfolded proteins. The sequence is that of Probable ATP-dependent Clp protease proteolytic subunit from Populus euphratica (Euphrates poplar).